Reading from the N-terminus, the 277-residue chain is uncharacterized protein (277 aa).

ATP is bound at residue 32–39; sequence GPQGSGKS.

This sequence belongs to the GLYK kinase family.

The protein resides in the cytoplasm. It is found in the nucleus. Has a role in meiosis. This is an uncharacterized protein from Schizosaccharomyces pombe (strain 972 / ATCC 24843) (Fission yeast).